The primary structure comprises 321 residues: 5,10-methylenetetrahydromethanopterin reductase (321 aa).

It belongs to the mer family. Homotetramer.

The protein resides in the cytoplasm. It carries out the reaction 5-methyl-5,6,7,8-tetrahydromethanopterin + oxidized coenzyme F420-(gamma-L-Glu)(n) + H(+) = 5,10-methylenetetrahydromethanopterin + reduced coenzyme F420-(gamma-L-Glu)(n). The protein operates within one-carbon metabolism; methanogenesis from CO(2); methyl-coenzyme M from 5,10-methylene-5,6,7,8-tetrahydromethanopterin: step 1/2. Catalyzes the reversible reduction of methylene-H(4)MPT to methyl-H(4)MPT. The protein is 5,10-methylenetetrahydromethanopterin reductase of Methanothermobacter marburgensis (strain ATCC BAA-927 / DSM 2133 / JCM 14651 / NBRC 100331 / OCM 82 / Marburg) (Methanobacterium thermoautotrophicum).